The sequence spans 292 residues: ATP synthase gamma chain (292 aa).

The protein belongs to the ATPase gamma chain family. In terms of assembly, F-type ATPases have 2 components, CF(1) - the catalytic core - and CF(0) - the membrane proton channel. CF(1) has five subunits: alpha(3), beta(3), gamma(1), delta(1), epsilon(1). CF(0) has three main subunits: a, b and c.

The protein localises to the cell membrane. In terms of biological role, produces ATP from ADP in the presence of a proton gradient across the membrane. The gamma chain is believed to be important in regulating ATPase activity and the flow of protons through the CF(0) complex. The chain is ATP synthase gamma chain from Streptococcus pneumoniae serotype 2 (strain D39 / NCTC 7466).